We begin with the raw amino-acid sequence, 689 residues long: DNA ligase (689 aa).

Residues 40–44 (DAEYD), 89–90 (SL), and glutamate 121 contribute to the NAD(+) site. The active-site N6-AMP-lysine intermediate is the lysine 123. Arginine 144, glutamate 179, lysine 295, and lysine 319 together coordinate NAD(+). Positions 413, 416, 431, and 437 each coordinate Zn(2+). A BRCT domain is found at 610-689 (REQSSLTGKI…AEWLTLVRDI (80 aa)).

The protein belongs to the NAD-dependent DNA ligase family. LigA subfamily. It depends on Mg(2+) as a cofactor. Requires Mn(2+) as cofactor.

The enzyme catalyses NAD(+) + (deoxyribonucleotide)n-3'-hydroxyl + 5'-phospho-(deoxyribonucleotide)m = (deoxyribonucleotide)n+m + AMP + beta-nicotinamide D-nucleotide.. In terms of biological role, DNA ligase that catalyzes the formation of phosphodiester linkages between 5'-phosphoryl and 3'-hydroxyl groups in double-stranded DNA using NAD as a coenzyme and as the energy source for the reaction. It is essential for DNA replication and repair of damaged DNA. This is DNA ligase from Rickettsia bellii (strain RML369-C).